A 200-amino-acid chain; its full sequence is MARYTGPSWKVSRRLGISLSGTGKELERRPYAPGQHGPTQRKKISEYGLQQAEKQKLRHMYGLTERQFKNTFNKAGKLQGKHGENFMILLEQRLDNIVYRLGLARTRRAARQLVNHGHITVDGKRVDIPSYQVSVGQVISVREKSAKNSAIAESLEVSSFVPEYVTFDAEKLTGSLNRLPERSELAAEINEAFIVEFYSR.

Positions 22–43 (TGKELERRPYAPGQHGPTQRKK) are disordered. The S4 RNA-binding domain maps to 92 to 170 (QRLDNIVYRL…VPEYVTFDAE (79 aa)).

Belongs to the universal ribosomal protein uS4 family. Part of the 30S ribosomal subunit. Contacts protein S5. The interaction surface between S4 and S5 is involved in control of translational fidelity.

One of the primary rRNA binding proteins, it binds directly to 16S rRNA where it nucleates assembly of the body of the 30S subunit. In terms of biological role, with S5 and S12 plays an important role in translational accuracy. The polypeptide is Small ribosomal subunit protein uS4 (Listeria monocytogenes serotype 4a (strain HCC23)).